The sequence spans 263 residues: Phosphatidylglycerol--prolipoprotein diacylglyceryl transferase (263 aa).

4 consecutive transmembrane segments (helical) span residues 15 to 35, 52 to 72, 83 to 103, and 112 to 132; these read ISIHWYAICIVSGLLLAVYLA, FILLAFPIAIVGARLYYVIFQ, IFAIWNGGIAIYGGLIAGAAV, and AIAVLDFLDIAAPGVMIAQSI. Arg134 is a binding site for a 1,2-diacyl-sn-glycero-3-phospho-(1'-sn-glycerol). The next 3 membrane-spanning stretches (helical) occupy residues 170-190, 200-220, and 230-250; these read VPTFLYESLWNLVGFSIILGL, GDVTSFYLIWYGLGRFVIEGM, and LRVSQWVSISIIILGAVLLYF.

This sequence belongs to the Lgt family.

Its subcellular location is the cell membrane. It carries out the reaction L-cysteinyl-[prolipoprotein] + a 1,2-diacyl-sn-glycero-3-phospho-(1'-sn-glycerol) = an S-1,2-diacyl-sn-glyceryl-L-cysteinyl-[prolipoprotein] + sn-glycerol 1-phosphate + H(+). The protein operates within protein modification; lipoprotein biosynthesis (diacylglyceryl transfer). Its function is as follows. Catalyzes the transfer of the diacylglyceryl group from phosphatidylglycerol to the sulfhydryl group of the N-terminal cysteine of a prolipoprotein, the first step in the formation of mature lipoproteins. This chain is Phosphatidylglycerol--prolipoprotein diacylglyceryl transferase, found in Streptococcus thermophilus (strain ATCC BAA-250 / LMG 18311).